Reading from the N-terminus, the 516-residue chain is Cytochrome P450 monooxygenase ntnM (516 aa).

The helical transmembrane segment at 22-42 (IINVILSIAAIALIRALAISI) threads the bilayer. Cysteine 453 contributes to the heme binding site.

The protein belongs to the cytochrome P450 family. Heme serves as cofactor.

The protein localises to the membrane. The protein operates within secondary metabolite biosynthesis; terpenoid biosynthesis. Cytochrome P450 monooxygenase; part of the gene cluster that mediates the biosynthesis of the meroterpenoids nectripenoids A and B, as well as cochliquninone D and isocochliquninone E. The pathway probably begins with the HR-PKS ntnH that catalyzes two chain-extension steps to form a reduced triketide, which then primes the SAT domain in the NR-PKS ntnG to initiate three more cycles of extension to give a linear hexaketide corresponding to the polyketide part of nectripenoids. The FAD-dependent monooxygenase ntnJ then performs an oxidative decarboxylation at C11 of the ntnH/ntnG product, via an electrophilic aromatic hydroxylation with concomitant ipso-decarboxylation. The membrane-bound polyprenyl transferase ntnF then introduces a farnesyl group before the FAD-dependent monooxygenase ntnK functions as the first epoxidase on terminal C12'-C13' olefin, followed by a second epoxidation on C7'-C8' catalyzed by ntnA. The terpene cyclase/mutase ntnI then initiates the sequential tricyclic ring formation through protonation of the terminal epoxide and catalyzes the regioselective and stereoselective 6/6/6-tricyclic ring formation. The cytochrome P450 monooxygenase ntnM may then hydroxylate C1'. The sequence is that of Cytochrome P450 monooxygenase ntnM from Nectria sp.